A 162-amino-acid polypeptide reads, in one-letter code: D-aminoacyl-tRNA deacylase (162 aa).

Residues 145–146 (GP) carry the Gly-cisPro motif, important for rejection of L-amino acids motif.

Belongs to the DTD family. Homodimer.

The protein resides in the cytoplasm. It carries out the reaction glycyl-tRNA(Ala) + H2O = tRNA(Ala) + glycine + H(+). The enzyme catalyses a D-aminoacyl-tRNA + H2O = a tRNA + a D-alpha-amino acid + H(+). Functionally, an aminoacyl-tRNA editing enzyme that deacylates mischarged D-aminoacyl-tRNAs. Also deacylates mischarged glycyl-tRNA(Ala), protecting cells against glycine mischarging by AlaRS. Acts via tRNA-based rather than protein-based catalysis; rejects L-amino acids rather than detecting D-amino acids in the active site. By recycling D-aminoacyl-tRNA to D-amino acids and free tRNA molecules, this enzyme counteracts the toxicity associated with the formation of D-aminoacyl-tRNA entities in vivo and helps enforce protein L-homochirality. The polypeptide is D-aminoacyl-tRNA deacylase (Bifidobacterium longum (strain DJO10A)).